Consider the following 491-residue polypeptide: Probable cytosol aminopeptidase (491 aa).

Lys261 and Asp266 together coordinate Mn(2+). The active site involves Lys273. Mn(2+) contacts are provided by Asp284, Asp343, and Glu345. Arg347 is an active-site residue.

This sequence belongs to the peptidase M17 family. Mn(2+) serves as cofactor.

It localises to the cytoplasm. The catalysed reaction is Release of an N-terminal amino acid, Xaa-|-Yaa-, in which Xaa is preferably Leu, but may be other amino acids including Pro although not Arg or Lys, and Yaa may be Pro. Amino acid amides and methyl esters are also readily hydrolyzed, but rates on arylamides are exceedingly low.. The enzyme catalyses Release of an N-terminal amino acid, preferentially leucine, but not glutamic or aspartic acids.. Its function is as follows. Presumably involved in the processing and regular turnover of intracellular proteins. Catalyzes the removal of unsubstituted N-terminal amino acids from various peptides. This is Probable cytosol aminopeptidase from Geobacter sp. (strain M21).